Reading from the N-terminus, the 124-residue chain is UPF0102 protein tll1737 (124 aa).

The protein belongs to the UPF0102 family.

The sequence is that of UPF0102 protein tll1737 from Thermosynechococcus vestitus (strain NIES-2133 / IAM M-273 / BP-1).